The sequence spans 429 residues: E3 ubiquitin-protein ligase ZNRF4 (429 aa).

The N-terminal stretch at 1-27 (MPLCRPEHLMPRASRVPVAASLPLSHA) is a signal peptide. Residues 28–250 (VIPTQLPSRP…PPCHDLGCHP (223 aa)) are Lumenal-facing. A disordered region spans residues 30–67 (PTQLPSRPGHRPPGRPRRCPKASCLPPPVGPSSTQTAK). Basic residues predominate over residues 37–49 (PGHRPPGRPRRCP). Residues Asn-107, Asn-152, and Asn-229 are each glycosylated (N-linked (GlcNAc...) asparagine). A PA domain is found at 151-223 (GNRSLGAIVL…VSEAASQDLR (73 aa)). Residues 251–271 (VLTVSWVLGCTLALVVSAFFV) traverse the membrane as a helical segment. Residues 272–429 (LNHLWLWAQA…SSAPPEAPGQ (158 aa)) lie on the Cytoplasmic side of the membrane. The RING-type; atypical zinc-finger motif lies at 309 to 352 (CAICLDEYEEGDQLKILPCSHTYHCKCIDPWFSQAPRRSCPVCK).

As to quaternary structure, interacts with CANX.

The protein resides in the endoplasmic reticulum membrane. The catalysed reaction is S-ubiquitinyl-[E2 ubiquitin-conjugating enzyme]-L-cysteine + [acceptor protein]-L-lysine = [E2 ubiquitin-conjugating enzyme]-L-cysteine + N(6)-ubiquitinyl-[acceptor protein]-L-lysine.. It participates in protein modification; protein ubiquitination. Its function is as follows. E3 ubiquitin-protein ligase that acts as a negative regulator of NOD2 signaling by mediating ubiquitination and degradation of RIPK2. Also catalyzes ubiquitination and proteasomal degradation of CANX within the endoplasmic reticulum. Could have a role in spermatogenesis. The chain is E3 ubiquitin-protein ligase ZNRF4 from Homo sapiens (Human).